Reading from the N-terminus, the 596-residue chain is Beta-fructofuranosidase, insoluble isoenzyme 6 (596 aa).

Positions 1–25 are cleaved as a signal peptide; it reads MALAGLPLSVFAIAVHFCLVFSSSS. Substrate is bound by residues 49–52, Gln68, and Trp76; that span reads WQND. Asp52 is an active-site residue. A glycan (N-linked (GlcNAc...) asparagine) is linked at Asn80. Substrate is bound by residues 113 to 114, 177 to 178, and Glu232; these read AS and RD. Residue Asn335 is glycosylated (N-linked (GlcNAc...) asparagine). Cys436 and Cys482 are disulfide-bonded. Asn556 carries N-linked (GlcNAc...) asparagine glycosylation.

It belongs to the glycosyl hydrolase 32 family. In terms of tissue distribution, expressed in roots. Weakly expressed in flowers.

It localises to the secreted. The protein localises to the extracellular space. Its subcellular location is the apoplast. It is found in the cell wall. The enzyme catalyses Hydrolysis of terminal non-reducing beta-D-fructofuranoside residues in beta-D-fructofuranosides.. The protein is Beta-fructofuranosidase, insoluble isoenzyme 6 (CIN6) of Oryza sativa subsp. japonica (Rice).